The chain runs to 384 residues: 5-amino-6-(D-ribitylamino)uracil--L-tyrosine 4-hydroxyphenyl transferase 2 (384 aa).

The region spanning 53–286 (VSYVVNRNIY…IAISRVILHT (234 aa)) is the Radical SAM core domain. [4Fe-4S] cluster-binding residues include C67, C71, and C74.

The protein belongs to the radical SAM superfamily. CofH family. In terms of assembly, consists of two subunits, CofG and CofH. The cofactor is [4Fe-4S] cluster.

It catalyses the reaction 5-amino-6-(D-ribitylamino)uracil + L-tyrosine + S-adenosyl-L-methionine = 5-amino-5-(4-hydroxybenzyl)-6-(D-ribitylimino)-5,6-dihydrouracil + 2-iminoacetate + 5'-deoxyadenosine + L-methionine + H(+). The protein operates within cofactor biosynthesis; coenzyme F0 biosynthesis. Its function is as follows. Catalyzes the radical-mediated synthesis of 5-amino-5-(4-hydroxybenzyl)-6-(D-ribitylimino)-5,6-dihydrouracil from 5-amino-6-(D-ribitylamino)uracil and L-tyrosine. In Methanosarcina mazei (strain ATCC BAA-159 / DSM 3647 / Goe1 / Go1 / JCM 11833 / OCM 88) (Methanosarcina frisia), this protein is 5-amino-6-(D-ribitylamino)uracil--L-tyrosine 4-hydroxyphenyl transferase 2.